We begin with the raw amino-acid sequence, 322 residues long: Protein mono-ADP-ribosyltransferase PARP16 (322 aa).

Residues 1 to 287 (MQPSGWAAAR…RASSQLSWFS (287 aa)) are Cytoplasmic-facing. The region spanning 5–91 (GWAAAREAAG…AWDLVSWILS (87 aa)) is the PARP alpha-helical domain. Aspartate 37 is subject to ADP-ribosyl aspartic acid. The residue at position 70 (glutamate 70) is an ADP-ribosyl glutamic acid. A PARP catalytic domain is found at 94-279 (VLTIHSAGKA…VYSQKPPKRA (186 aa)). N6-(ADP-ribosyl)lysine occurs at positions 110 and 137. 3 residues coordinate NAD(+): histidine 152, tyrosine 182, and tyrosine 254. A helical transmembrane segment spans residues 288–308 (SHWFTVMISLYLLLLLIVSVI). Residues 309–322 (NSSAFQHFWNRAKR) lie on the Lumenal side of the membrane.

The protein belongs to the ARTD/PARP family. As to quaternary structure, interacts with KPNB1. Post-translationally, auto-mono-ADP-ribosylated.

It is found in the endoplasmic reticulum membrane. It catalyses the reaction L-aspartyl-[protein] + NAD(+) = 4-O-(ADP-D-ribosyl)-L-aspartyl-[protein] + nicotinamide. It carries out the reaction L-glutamyl-[protein] + NAD(+) = 5-O-(ADP-D-ribosyl)-L-glutamyl-[protein] + nicotinamide. The enzyme catalyses L-lysyl-[protein] + NAD(+) = N(6)-(ADP-D-ribosyl)-L-lysyl-[protein] + nicotinamide + H(+). Its activity is regulated as follows. In absence of activation signal, PARP16 is autoinhibited by the PARP alpha-helical domain (also named HD region), which prevents effective NAD(+)-binding. Activity is highly stimulated by signals, which unfold the PARP alpha-helical domain, relieving autoinhibition. Its function is as follows. Intracellular mono-ADP-ribosyltransferase that plays a role in different processes, such as protein translation and unfolded protein response (UPR), through the mono-ADP-ribosylation of proteins involved in those processes. Acts as an inhibitor of protein translation by catalyzing mono-ADP-ribosylation of ribosomal subunits, such as RPL14 and RPS6, thereby inhibiting polysome assembly and mRNA loading. Mono-ADP-ribosylation of ribosomal subunits is promoted by NMNAT2. Involved in the unfolded protein response (UPR) by ADP-ribosylating and activating EIF2AK3 and ERN1, two important UPR effectors. May also mediate mono-ADP-ribosylation of karyopherin KPNB1 a nuclear import factor. May not modify proteins on arginine or cysteine residues compared to other mono-ADP-ribosyltransferases. In Homo sapiens (Human), this protein is Protein mono-ADP-ribosyltransferase PARP16.